Consider the following 326-residue polypeptide: Flavanone 3-dioxygenase 3 (326 aa).

The span at 1–15 (MSDTSKGIPQEQLPS) shows a compositional bias: polar residues. Residues 1–21 (MSDTSKGIPQEQLPSQELHPP) form a disordered region. The Fe2OG dioxygenase domain maps to 175-276 (EGLQLLSVNC…RISLASIHGF (102 aa)). Positions 200, 202, and 257 each coordinate Fe cation. Arg-267 is a 2-oxoglutarate binding site.

It belongs to the iron/ascorbate-dependent oxidoreductase family. Requires Fe(2+) as cofactor. It depends on L-ascorbate as a cofactor. As to expression, expressed at very low levels in roots, leaves, stems and seeds.

It carries out the reaction a (2S)-flavan-4-one + 2-oxoglutarate + O2 = a (2R,3R)-dihydroflavonol + succinate + CO2. It functions in the pathway secondary metabolite biosynthesis; flavonoid biosynthesis. Functionally, catalyzes the 3-beta-hydroxylation of 2S-flavanones to 2R,3R-dihydroflavonols which are intermediates in the biosynthesis of flavonols, anthocyanidins, catechins and proanthocyanidins in plants. Converts (2S)-eriodictyol to (+)-taxifolin and (2S)-naringenin to (+)-(2R/3R)-dihydrokaempferol in vitro. This is Flavanone 3-dioxygenase 3 from Oryza sativa subsp. japonica (Rice).